The sequence spans 78 residues: Short neurotoxin SNTX11 (78 aa).

The signal sequence occupies residues 1–21 (MKTLLLTFLVVTIVCLDLGYT). Intrachain disulfides connect C24–C40, C33–C58, C62–C70, and C71–C76.

The protein belongs to the three-finger toxin family. Short-chain subfamily. Expressed by the venom gland.

The protein localises to the secreted. Functionally, this three-finger toxin binds and inhibits the nicotinic acetylcholine receptor (nAChR). The polypeptide is Short neurotoxin SNTX11 (Ophiophagus hannah (King cobra)).